The sequence spans 147 residues: Transcriptional regulator MraZ (147 aa).

SpoVT-AbrB domains follow at residues 5–52 (SHAI…PETE) and 81–124 (ATTL…SEEA).

It belongs to the MraZ family. In terms of assembly, forms oligomers.

The protein resides in the cytoplasm. Its subcellular location is the nucleoid. This chain is Transcriptional regulator MraZ, found in Saccharophagus degradans (strain 2-40 / ATCC 43961 / DSM 17024).